The following is a 437-amino-acid chain: Type II methylase M.HgiEI (437 aa).

In terms of domain architecture, SAM-dependent MTase C5-type spans 4 to 431 (FRFIDLFAGI…KRLQCVKLFE (428 aa)). The active site involves Cys-75.

Belongs to the class I-like SAM-binding methyltransferase superfamily. C5-methyltransferase family.

The enzyme catalyses a 2'-deoxycytidine in DNA + S-adenosyl-L-methionine = a 5-methyl-2'-deoxycytidine in DNA + S-adenosyl-L-homocysteine + H(+). Functionally, a methylase that recognizes the double-stranded sequence 5'-GGWCC-3', methylates C-? on both strands, and protects the DNA from cleavage by the HgiEI endonuclease. This system is more active than isoschizomeric RM.HgiBI. This Herpetosiphon aurantiacus (Herpetosiphon giganteus) protein is Type II methylase M.HgiEI.